A 465-amino-acid chain; its full sequence is Chromosomal replication initiator protein DnaA (465 aa).

The segment at M1 to E87 is domain I, interacts with DnaA modulators. The disordered stretch occupies residues S81–S123. Positions Q88–P100 are enriched in low complexity. The interval Q88 to K127 is domain II. Residues L128–S345 are domain III, AAA+ region. G173, G175, K176, and T177 together coordinate ATP. Positions R346 to S465 are domain IV, binds dsDNA.

It belongs to the DnaA family. As to quaternary structure, oligomerizes as a right-handed, spiral filament on DNA at oriC.

The protein resides in the cytoplasm. Plays an essential role in the initiation and regulation of chromosomal replication. ATP-DnaA binds to the origin of replication (oriC) to initiate formation of the DNA replication initiation complex once per cell cycle. Binds the DnaA box (a 9 base pair repeat at the origin) and separates the double-stranded (ds)DNA. Forms a right-handed helical filament on oriC DNA; dsDNA binds to the exterior of the filament while single-stranded (ss)DNA is stabiized in the filament's interior. The ATP-DnaA-oriC complex binds and stabilizes one strand of the AT-rich DNA unwinding element (DUE), permitting loading of DNA polymerase. After initiation quickly degrades to an ADP-DnaA complex that is not apt for DNA replication. Binds acidic phospholipids. This chain is Chromosomal replication initiator protein DnaA, found in Acinetobacter baumannii (strain SDF).